Consider the following 479-residue polypeptide: Long-chain acyl-protein thioester reductase (479 aa).

It belongs to the LuxC family.

It carries out the reaction a long-chain fatty aldehyde + NADP(+) + CoA = a long-chain fatty acyl-CoA + NADPH + H(+). It participates in lipid metabolism; fatty acid reduction for biolumincescence. In terms of biological role, luxC is the fatty acid reductase enzyme responsible for synthesis of the aldehyde substrate for the luminescent reaction catalyzed by luciferase. The polypeptide is Long-chain acyl-protein thioester reductase (luxC) (Aliivibrio fischeri (Vibrio fischeri)).